The sequence spans 287 residues: MNSKKHLGHTARKRFGQNFLHDTSVIQGIVAAIYPQPNQFLVEIGPGLGALTEPVGELVDHLTVVELDRDLAERLRHHPFLHQKLTVIETDAMQFDFGALYTKENLAEKGQKLRVFGNLPYNISTPLMFHLFKYHDVIQDMHFMLQKEVVKRLCAAPNSKAYGRLTIMAQYFCQVMPVLEVPPSAFKPAPKVDSAVVRLIPHKELPHPVKDLYWLNRVCSQAFNQRRKTLRNALSTLFSPENLTALGIDLNARAENLAIADYARLANWLADNPPADINKDEILDSEE.

S-adenosyl-L-methionine-binding residues include Asn-18, Leu-20, Gly-45, Glu-66, Asp-91, and Asn-118.

Belongs to the class I-like SAM-binding methyltransferase superfamily. rRNA adenine N(6)-methyltransferase family. RsmA subfamily.

Its subcellular location is the cytoplasm. It carries out the reaction adenosine(1518)/adenosine(1519) in 16S rRNA + 4 S-adenosyl-L-methionine = N(6)-dimethyladenosine(1518)/N(6)-dimethyladenosine(1519) in 16S rRNA + 4 S-adenosyl-L-homocysteine + 4 H(+). Functionally, specifically dimethylates two adjacent adenosines (A1518 and A1519) in the loop of a conserved hairpin near the 3'-end of 16S rRNA in the 30S particle. May play a critical role in biogenesis of 30S subunits. The sequence is that of Ribosomal RNA small subunit methyltransferase A from Haemophilus influenzae (strain PittEE).